A 230-amino-acid chain; its full sequence is Uracil-DNA glycosylase (230 aa).

Aspartate 70 functions as the Proton acceptor in the catalytic mechanism.

This sequence belongs to the uracil-DNA glycosylase (UDG) superfamily. UNG family.

It is found in the cytoplasm. The catalysed reaction is Hydrolyzes single-stranded DNA or mismatched double-stranded DNA and polynucleotides, releasing free uracil.. In terms of biological role, excises uracil residues from the DNA which can arise as a result of misincorporation of dUMP residues by DNA polymerase or due to deamination of cytosine. In Pseudomonas entomophila (strain L48), this protein is Uracil-DNA glycosylase.